The following is a 168-amino-acid chain: Small ribosomal subunit protein uS5c (168 aa).

The region spanning 17–80 is the S5 DRBM domain; sequence WSERVIQITR…SDCKKQIIEF (64 aa).

The protein belongs to the universal ribosomal protein uS5 family. Part of the 30S ribosomal subunit. Contacts protein S4.

It is found in the plastid. It localises to the chloroplast. Its function is as follows. With S4 and S12 plays an important role in translational accuracy. The chain is Small ribosomal subunit protein uS5c (rps5) from Cyanidium caldarium (Red alga).